Consider the following 217-residue polypeptide: tRNA 5-hydroxyuridine methyltransferase (217 aa).

S-adenosyl-L-methionine-binding positions include Met-38, Ser-68, Glu-85, 113 to 114 (DA), and Asp-133. Mg(2+) contacts are provided by Asp-133, Asp-159, and Asn-160.

Belongs to the class I-like SAM-binding methyltransferase superfamily. Cation-dependent O-methyltransferase family. As to quaternary structure, homodimer.

The catalysed reaction is 5-hydroxyuridine(34) in tRNA + S-adenosyl-L-methionine = 5-methoxyuridine(34) in tRNA + S-adenosyl-L-homocysteine + H(+). Functionally, catalyzes the methylation of 5-hydroxyuridine (ho5U) to form 5-methoxyuridine (mo5U) at position 34 in tRNAs. This is tRNA 5-hydroxyuridine methyltransferase from Bacillus subtilis (strain 168).